The following is a 300-amino-acid chain: Tyrosine recombinase XerC (300 aa).

The Core-binding (CB) domain maps to 2–88 (TQEGQLEKRF…SLRSFYTFLL (87 aa)). The 186-residue stretch at 109–294 (RLPKFFYSEE…TKEHLKSTYM (186 aa)) folds into the Tyr recombinase domain. Active-site residues include Arg-150, Lys-174, His-246, Arg-249, and His-272. Tyr-281 serves as the catalytic O-(3'-phospho-DNA)-tyrosine intermediate.

Belongs to the 'phage' integrase family. XerC subfamily. As to quaternary structure, forms a cyclic heterotetrameric complex composed of two molecules of XerC and two molecules of XerD.

The protein localises to the cytoplasm. In terms of biological role, site-specific tyrosine recombinase, which acts by catalyzing the cutting and rejoining of the recombining DNA molecules. The XerC-XerD complex is essential to convert dimers of the bacterial chromosome into monomers to permit their segregation at cell division. It also contributes to the segregational stability of plasmids. This chain is Tyrosine recombinase XerC, found in Listeria innocua serovar 6a (strain ATCC BAA-680 / CLIP 11262).